The primary structure comprises 58 residues: Ribulose bisphosphate carboxylase large chain (58 aa).

Positions 1-2 are excised as a propeptide; sequence MS. Proline 3 carries the N-acetylproline modification. At lysine 14 the chain carries N6,N6,N6-trimethyllysine.

Belongs to the RuBisCO large chain family. Type I subfamily. Heterohexadecamer of 8 large chains and 8 small chains.

It localises to the plastid. It is found in the chloroplast. The catalysed reaction is 2 (2R)-3-phosphoglycerate + 2 H(+) = D-ribulose 1,5-bisphosphate + CO2 + H2O. It catalyses the reaction D-ribulose 1,5-bisphosphate + O2 = 2-phosphoglycolate + (2R)-3-phosphoglycerate + 2 H(+). In terms of biological role, ruBisCO catalyzes two reactions: the carboxylation of D-ribulose 1,5-bisphosphate, the primary event in carbon dioxide fixation, as well as the oxidative fragmentation of the pentose substrate in the photorespiration process. Both reactions occur simultaneously and in competition at the same active site. The chain is Ribulose bisphosphate carboxylase large chain (rbcL) from Euphorbia characias (Albanian spurge).